We begin with the raw amino-acid sequence, 475 residues long: uncharacterized protein (475 aa).

This is an uncharacterized protein from Schizosaccharomyces pombe (strain 972 / ATCC 24843) (Fission yeast).